A 122-amino-acid polypeptide reads, in one-letter code: MIQQESRLRVADNTGAREILCIRVLGGSGRRYAGIGDIIVGTVKDALPGAGVKRGDVVKAVVVRTKKERRRPDGSYIRFDENAAVLIRDGGDPRGTRIFGPVGRELRDKRFMKIISLAPEVL.

The protein belongs to the universal ribosomal protein uL14 family. In terms of assembly, part of the 50S ribosomal subunit. Forms a cluster with proteins L3 and L19. In the 70S ribosome, L14 and L19 interact and together make contacts with the 16S rRNA in bridges B5 and B8.

Its function is as follows. Binds to 23S rRNA. Forms part of two intersubunit bridges in the 70S ribosome. In Parafrankia sp. (strain EAN1pec), this protein is Large ribosomal subunit protein uL14.